Here is a 692-residue protein sequence, read N- to C-terminus: MGLSTNLHSLDLRSTFFTGLRTSPIPSNFIKISSISNPRRDISTIRAQVSTISLETSVKQRQDEIESLFSKQPSQQDSDRKRNGKSSKNGASGISSGVKLENIRKSYKGVTVLKDVTWEVKRGEKVGLVGVNGAGKTTQLRIITGQEEPDSGNVIKAKPNMKVAFLSQEFEVSMSKTVREEFMTAFKEEMEITEKLEKVQKAIEGSVDDLDLMGRLLDEFDLLQRRAQAVNLDSVDAKISKLMPELGFAPEDADRLVASFSGGWQMRMSLGKILLQDPDLLLLDEPTNHLDLDTIEWLEGYLQKQDVPMVIISHDRAFLDQLCTKIVETEMGVSRTFEGNYSQYVISKAEWIETQNAAWEKQQKDIDSTKDLIARLGAGANSGRASTAEKKLEKLQEQELIEKPFQRKQMKIRFPERGTSGRSVVNVKNIDFGFEDKMLFKKANLSIERGEKIAILGPNGCGKSTLLKLIMGLEKPVKGEVILGEHNVLPNYFEQNQAEVLDLDKTVLETVCEAAEDWRSDDIKGLLGRCNFKADMLDRKVSLLSGGEKARLAFCKFMVTPSTLLVLDEPTNHLDIPSKEMLEEAINEYQGTVIAVSHDRYFIKQIVNRVIEVEDGCLEDYAGDYNYYLEKNLDARTKELEREAELEEKAPKVKAKSKMSKAEKEARKKQKMQAFQQAKQKSKASKNSKRWN.

Positions E64 to S95 are disordered. Positions S86–S95 are enriched in polar residues. ABC transporter domains follow at residues V98–N356 and V425–L640. Residues G130–T137 and G457–S464 contribute to the ATP site. A disordered region spans residues A644–N692. The segment covering Q680–N692 has biased composition (basic residues).

This sequence belongs to the ABC transporter superfamily. ABCF family. EF3 (TC 3.A.1.121) subfamily.

This chain is ABC transporter F family member 5 (ABCF5), found in Arabidopsis thaliana (Mouse-ear cress).